The primary structure comprises 144 residues: 3-dehydroquinate dehydratase (144 aa).

Catalysis depends on Tyr-24, which acts as the Proton acceptor. 3 residues coordinate substrate: Asn-76, His-82, and Asp-89. His-102 (proton donor) is an active-site residue. Residues Leu-103–Ser-104 and Arg-113 each bind substrate.

It belongs to the type-II 3-dehydroquinase family. Homododecamer.

It carries out the reaction 3-dehydroquinate = 3-dehydroshikimate + H2O. The protein operates within metabolic intermediate biosynthesis; chorismate biosynthesis; chorismate from D-erythrose 4-phosphate and phosphoenolpyruvate: step 3/7. Its function is as follows. Catalyzes a trans-dehydration via an enolate intermediate. This Bordetella bronchiseptica (strain ATCC BAA-588 / NCTC 13252 / RB50) (Alcaligenes bronchisepticus) protein is 3-dehydroquinate dehydratase.